A 237-amino-acid chain; its full sequence is Uridylate kinase (237 aa).

Position 9 to 12 (9 to 12) interacts with ATP; that stretch reads KLSG. Gly51 provides a ligand contact to UMP. The ATP site is built by Gly52 and Arg56. UMP is bound by residues Asp71 and 132 to 139; that span reads CGNPFFTT. Residues Thr159, Tyr165, and Asp168 each coordinate ATP.

Belongs to the UMP kinase family. In terms of assembly, homohexamer.

Its subcellular location is the cytoplasm. The catalysed reaction is UMP + ATP = UDP + ADP. It functions in the pathway pyrimidine metabolism; CTP biosynthesis via de novo pathway; UDP from UMP (UMPK route): step 1/1. Its activity is regulated as follows. Inhibited by UTP. Catalyzes the reversible phosphorylation of UMP to UDP. The protein is Uridylate kinase of Prochlorococcus marinus (strain MIT 9303).